A 268-amino-acid chain; its full sequence is Minor capsid protein VP2 (268 aa).

The span at 132–144 shows a compositional bias: polar residues; that stretch reads STPQSLGALTGRT. A disordered region spans residues 132-199; sequence STPQSLGALT…SLSSAARTRS (68 aa). The span at 145 to 163 shows a compositional bias: low complexity; sequence NSRVSAPARSSPSALSNAP. Over residues 164-178 the composition is skewed to polar residues; the sequence is TATSLHSNQTVSTRL. The segment covering 179 to 195 has biased composition (low complexity); that stretch reads GSSAGSGTGVSSLSSAA.

This sequence belongs to the norovirus VP2 family. Homooligomer. The portal-like structure consists in 12 copies of VP2. Interacts with capsid protein VP1.

It is found in the virion. The protein resides in the host cytoplasm. Functionally, minor structural protein that forms a portal-like structure at a unique three-fold axis of symmetry, following binding to the host receptor. The channel formed by VP2 may allow the delivery of the viral genome through the host endosomal membrane. This is Minor capsid protein VP2 from Lordsdale virus (strain GII/Human/United Kingdom/Lordsdale/1993) (Human enteric calicivirus).